We begin with the raw amino-acid sequence, 291 residues long: Meiosis-specific protein SPO13 (291 aa).

3 disordered regions span residues 1–30, 116–143, and 271–291; these read MAPR…QEKT, SFDN…QSSQ, and CSDY…SSLN. The Nuclear localization signal motif lies at 3–6; the sequence is PRKR. Basic and acidic residues predominate over residues 116–125; it reads SFDNSLRFED. Residues 130–143 show a composition bias toward polar residues; it reads PKSTSTPVLSQSSQ.

The protein localises to the nucleus. Required for meiosis I segmentation. Probably acts as a regulator of kinetochore function during meiosis I: required both for mono-orientation of kinetochores on sister chromosomes and protection of centromeric cohesin from separase-mediated cleavage. This chain is Meiosis-specific protein SPO13 (SPO13), found in Saccharomyces cerevisiae (strain ATCC 204508 / S288c) (Baker's yeast).